We begin with the raw amino-acid sequence, 510 residues long: uncharacterized protein (510 aa).

A run of 12 helical transmembrane segments spans residues 17-37 (LKLGIISLGLGGLYSIILVVL), 56-76 (LIIHVNLSILIWLLSITASVW), 111-131 (VLYIYPKLAFFATLLIAISPL), 148-168 (IVFILGLSLFGVTLLLYAINI), 180-200 (LVNVTVFSTIIMFILSFVCFG), 223-243 (LLFWSGGHLLQFIYTQILIFI), 261-281 (FYLFILYLNFVFSILILFGHI), 300-320 (YLGGIAPILCLVGMVVELVLM), 355-375 (IIKTILLCSITLFLLGGLIAI), 382-402 (LVIPAHYHGSIVGISIACMGY), 434-454 (AIYLLTFGQILHILGLAFSGI), and 472-492 (LLMGMMGIGGLIAIVGGLMFV).

This sequence to A.aeolicus AQ_155.

It localises to the cell membrane. This is an uncharacterized protein from Rickettsia prowazekii (strain Madrid E).